The sequence spans 231 residues: LexA repressor (231 aa).

The segment at residues 26–46 (FEEMKEALDLKSKSGIHRLIG) is a DNA-binding region (H-T-H motif). Active-site for autocatalytic cleavage activity residues include Ser-152 and Lys-190.

This sequence belongs to the peptidase S24 family. Homodimer.

It carries out the reaction Hydrolysis of Ala-|-Gly bond in repressor LexA.. Represses a number of genes involved in the response to DNA damage (SOS response), including recA and lexA. In the presence of single-stranded DNA, RecA interacts with LexA causing an autocatalytic cleavage which disrupts the DNA-binding part of LexA, leading to derepression of the SOS regulon and eventually DNA repair. This is LexA repressor from Acidiphilium cryptum (strain JF-5).